The following is a 206-amino-acid chain: Small ribosomal subunit protein uS4 (206 aa).

The S4 RNA-binding domain maps to 96–156; that stretch reads GRLDNVVYRM…EKAKKQSRVK (61 aa).

The protein belongs to the universal ribosomal protein uS4 family. Part of the 30S ribosomal subunit. Contacts protein S5. The interaction surface between S4 and S5 is involved in control of translational fidelity.

Its function is as follows. One of the primary rRNA binding proteins, it binds directly to 16S rRNA where it nucleates assembly of the body of the 30S subunit. In terms of biological role, with S5 and S12 plays an important role in translational accuracy. This Pectobacterium atrosepticum (strain SCRI 1043 / ATCC BAA-672) (Erwinia carotovora subsp. atroseptica) protein is Small ribosomal subunit protein uS4.